The primary structure comprises 150 residues: D-aminoacyl-tRNA deacylase (150 aa).

The short motif at 138 to 139 is the Gly-cisPro motif, important for rejection of L-amino acids element; it reads GP.

This sequence belongs to the DTD family. Homodimer.

The protein resides in the cytoplasm. The enzyme catalyses glycyl-tRNA(Ala) + H2O = tRNA(Ala) + glycine + H(+). It carries out the reaction a D-aminoacyl-tRNA + H2O = a tRNA + a D-alpha-amino acid + H(+). Functionally, an aminoacyl-tRNA editing enzyme that deacylates mischarged D-aminoacyl-tRNAs. Also deacylates mischarged glycyl-tRNA(Ala), protecting cells against glycine mischarging by AlaRS. Acts via tRNA-based rather than protein-based catalysis; rejects L-amino acids rather than detecting D-amino acids in the active site. By recycling D-aminoacyl-tRNA to D-amino acids and free tRNA molecules, this enzyme counteracts the toxicity associated with the formation of D-aminoacyl-tRNA entities in vivo and helps enforce protein L-homochirality. This is D-aminoacyl-tRNA deacylase from Phocaeicola vulgatus (strain ATCC 8482 / DSM 1447 / JCM 5826 / CCUG 4940 / NBRC 14291 / NCTC 11154) (Bacteroides vulgatus).